Consider the following 80-residue polypeptide: Protein FAM229B (80 aa).

The disordered stretch occupies residues 1-45; that stretch reads MPFRFGTQPRRFPVEGGDSSIELESGLSSSASCNGKETSPNRQLR. Residues 15–32 show a composition bias toward low complexity; sequence EGGDSSIELESGLSSSAS. Residues 33–42 are compositionally biased toward polar residues; the sequence is CNGKETSPNR.

Belongs to the FAM229 family.

This is Protein FAM229B (Fam229b) from Rattus norvegicus (Rat).